The primary structure comprises 792 residues: Serine/threonine-protein kinase Nek4 (792 aa).

The 256-residue stretch at 6 to 261 folds into the Protein kinase domain; sequence YCYMRVVGRG…VRSILRQPYI (256 aa). ATP contacts are provided by residues 12-20 and Lys35; that span reads VGRGSYGEV. Asp131 serves as the catalytic Proton acceptor. Thr165 carries the post-translational modification Phosphothreonine; by autocatalysis. 4 disordered regions span residues 329 to 358, 379 to 515, 527 to 611, and 628 to 657; these read QEKP…NTGE, ANAG…LPSY, QQND…SITQ, and LSED…TNEM. Ser340 and Ser343 each carry phosphoserine. Composition is skewed to polar residues over residues 412-421, 456-467, 473-484, 496-505, and 541-551; these read QGNTKSSDQP, DQVTGIIENQDS, QPHSSMSEPSLS, AHSGTKSQFQ, and VNSSRTSSTAS. Lys566 carries the post-translational modification N6-methyllysine. The segment covering 602–611 has biased composition (polar residues); the sequence is RFSSDCSITQ. Residues 641 to 657 are compositionally biased toward basic and acidic residues; it reads DKSDGDSREGKSHTNEM. Phosphoserine is present on Ser675.

Belongs to the protein kinase superfamily. NEK Ser/Thr protein kinase family. NIMA subfamily. Mn(2+) serves as cofactor. In terms of tissue distribution, expressed ubiquitously among various organs and is up-regulated in the testis.

It localises to the cytoplasm. It is found in the cell projection. Its subcellular location is the cilium. The enzyme catalyses L-seryl-[protein] + ATP = O-phospho-L-seryl-[protein] + ADP + H(+). It catalyses the reaction L-threonyl-[protein] + ATP = O-phospho-L-threonyl-[protein] + ADP + H(+). Required for normal entry into proliferative arrest after a limited number of cell divisions, also called replicative senescence. Required for normal cell cycle arrest in response to double-stranded DNA damage. Protein kinase that seems to act exclusively upon threonine residues. In Mus musculus (Mouse), this protein is Serine/threonine-protein kinase Nek4 (Nek4).